Consider the following 627-residue polypeptide: Probable inactive L-type lectin-domain containing receptor kinase III.1 (627 aa).

The N-terminal stretch at 1 to 23 (MITFKSIALTIIFLSYFVSCVSS) is a signal peptide. The Extracellular portion of the chain corresponds to 24 to 303 (QRETKFLNHG…STEKKSNNTM (280 aa)). Residues 26–262 (ETKFLNHGFL…SHFVLGWSFN (237 aa)) form a legume-lectin like region. N-linked (GlcNAc...) asparagine glycosylation is found at Asn57, Asn78, Asn127, Asn184, Asn202, Asn209, and Asn230. The interval 272–297 (ITKLPSLPDPPPTLSPSPSPPVSTEK) is disordered. Residues 278 to 292 (LPDPPPTLSPSPSPP) are compositionally biased toward pro residues. Residue Asn300 is glycosylated (N-linked (GlcNAc...) asparagine). Residues 304-324 (LIIIVAASATVALMILIFSGF) form a helical membrane-spanning segment. The Cytoplasmic portion of the chain corresponds to 325–627 (WFLRRDKIFF…PHDDYLFYGV (303 aa)). The 271-residue stretch at 353-623 (FDNSKLLGER…TEALPHDDYL (271 aa)) folds into the Protein kinase domain. ATP-binding positions include 359 to 367 (LGERNSGSF) and Lys381.

This sequence in the C-terminal section; belongs to the protein kinase superfamily. Ser/Thr protein kinase family. It in the N-terminal section; belongs to the leguminous lectin family.

Its subcellular location is the cell membrane. In Arabidopsis thaliana (Mouse-ear cress), this protein is Probable inactive L-type lectin-domain containing receptor kinase III.1 (LECRK31).